A 302-amino-acid chain; its full sequence is Recombination-associated protein RdgC (302 aa).

Belongs to the RdgC family.

The protein resides in the cytoplasm. Its subcellular location is the nucleoid. In terms of biological role, may be involved in recombination. The sequence is that of Recombination-associated protein RdgC from Mannheimia succiniciproducens (strain KCTC 0769BP / MBEL55E).